A 113-amino-acid chain; its full sequence is Large ribosomal subunit protein uL22 (113 aa).

The protein belongs to the universal ribosomal protein uL22 family. In terms of assembly, part of the 50S ribosomal subunit.

In terms of biological role, this protein binds specifically to 23S rRNA; its binding is stimulated by other ribosomal proteins, e.g. L4, L17, and L20. It is important during the early stages of 50S assembly. It makes multiple contacts with different domains of the 23S rRNA in the assembled 50S subunit and ribosome. Its function is as follows. The globular domain of the protein is located near the polypeptide exit tunnel on the outside of the subunit, while an extended beta-hairpin is found that lines the wall of the exit tunnel in the center of the 70S ribosome. The protein is Large ribosomal subunit protein uL22 of Trichlorobacter lovleyi (strain ATCC BAA-1151 / DSM 17278 / SZ) (Geobacter lovleyi).